A 121-amino-acid chain; its full sequence is Small ribosomal subunit protein bS6 (121 aa).

The tract at residues 99 to 121 (PSLMMRNVEREEARKTQQQEFAA) is disordered. The segment covering 105 to 115 (NVEREEARKTQ) has biased composition (basic and acidic residues).

It belongs to the bacterial ribosomal protein bS6 family.

Functionally, binds together with bS18 to 16S ribosomal RNA. This Polaromonas naphthalenivorans (strain CJ2) protein is Small ribosomal subunit protein bS6.